Consider the following 291-residue polypeptide: Beta-lactamase CTX-M-15 (291 aa).

Positions 1 to 28 (MVKKSLRQFTLMATATVTLLLGSVPLYA) are cleaved as a signal peptide. Ser-73 acts as the Nucleophile; acyl-ester intermediate in catalysis. Residues Lys-76, Ser-133, Glu-169, and Ser-240 each coordinate a beta-lactam.

It belongs to the class-A beta-lactamase family. In terms of assembly, monomer.

It is found in the secreted. It catalyses the reaction a beta-lactam + H2O = a substituted beta-amino acid. Inhibited by the beta-lactamase-blocking agents clavulanic acid and avibactam, via a covalent binding to Ser-73. Functionally, extended-spectrum beta-lactamase (ESBL) which confers resistance to penicillins, as well as first, second, third and fourth-generation cephalosporins. Has cefotaxime- and ceftazidime-hydrolyzing activity. Inactive against the carbapenem antibiotics, imipenem, meropenem and ertapenem. This chain is Beta-lactamase CTX-M-15, found in Escherichia coli O25b:H4.